We begin with the raw amino-acid sequence, 271 residues long: 3-methyl-2-oxobutanoate hydroxymethyltransferase (271 aa).

Residues Asp-52 and Asp-91 each contribute to the Mg(2+) site. 3-methyl-2-oxobutanoate-binding positions include 52–53, Asp-91, and Lys-121; that span reads DS. Residue Glu-123 coordinates Mg(2+). Glu-189 (proton acceptor) is an active-site residue.

It belongs to the PanB family. Homodecamer; pentamer of dimers. Mg(2+) is required as a cofactor.

Its subcellular location is the cytoplasm. The enzyme catalyses 3-methyl-2-oxobutanoate + (6R)-5,10-methylene-5,6,7,8-tetrahydrofolate + H2O = 2-dehydropantoate + (6S)-5,6,7,8-tetrahydrofolate. It participates in cofactor biosynthesis; (R)-pantothenate biosynthesis; (R)-pantoate from 3-methyl-2-oxobutanoate: step 1/2. Functionally, catalyzes the reversible reaction in which hydroxymethyl group from 5,10-methylenetetrahydrofolate is transferred onto alpha-ketoisovalerate to form ketopantoate. The polypeptide is 3-methyl-2-oxobutanoate hydroxymethyltransferase (Acidothermus cellulolyticus (strain ATCC 43068 / DSM 8971 / 11B)).